The sequence spans 341 residues: Methionine import ATP-binding protein MetN (341 aa).

One can recognise an ABC transporter domain in the interval 9 to 247 (ISVEQLNKEI…PQSAITEELF (239 aa)). 41–48 (GHSGSGKS) is an ATP binding site.

It belongs to the ABC transporter superfamily. Methionine importer (TC 3.A.1.24) family. In terms of assembly, the complex is composed of two ATP-binding proteins (MetN), two transmembrane proteins (MetI) and a solute-binding protein (MetQ).

It is found in the cell inner membrane. The enzyme catalyses L-methionine(out) + ATP + H2O = L-methionine(in) + ADP + phosphate + H(+). It catalyses the reaction D-methionine(out) + ATP + H2O = D-methionine(in) + ADP + phosphate + H(+). Functionally, part of the ABC transporter complex MetNIQ involved in methionine import. Responsible for energy coupling to the transport system. The sequence is that of Methionine import ATP-binding protein MetN from Chlamydia abortus (strain DSM 27085 / S26/3) (Chlamydophila abortus).